A 277-amino-acid polypeptide reads, in one-letter code: Mitochondrial outer membrane protein porin 5 (277 aa).

The protein belongs to the eukaryotic mitochondrial porin (TC 1.B.8.1) family.

Its subcellular location is the mitochondrion outer membrane. In terms of biological role, forms a channel through the mitochondrial outer membrane that allows diffusion of small hydrophilic molecules. The channel adopts an open conformation at low or zero membrane potential and a closed conformation at potentials above 30-40 mV. The open state has a weak anion selectivity whereas the closed state is cation-selective. In Oryza sativa subsp. japonica (Rice), this protein is Mitochondrial outer membrane protein porin 5 (VDAC5).